The primary structure comprises 141 residues: ATP synthase F(0) complex subunit C2, mitochondrial (141 aa).

The N-terminal 66 residues, 1 to 66, are a transit peptide targeting the mitochondrion; it reads MYACSKFVST…RSFQTSAISR (66 aa). The chain crosses the membrane as a helical span at residues 82-102; sequence VGVAGSGAGIGTVFGSLIIGY. N6,N6,N6-trimethyllysine is present on lysine 109. The helical transmembrane segment at 117–137 threads the bilayer; the sequence is ILGFALSEAMGLFCLMVAFLI.

It belongs to the ATPase C chain family. F-type ATPases have 2 components, CF(1) - the catalytic core - and CF(0) - the membrane proton channel. CF(1) has five subunits: alpha(3), beta(3), gamma(1), delta(1), epsilon(1). CF(0) has three main subunits: a, b and c. Interacts with DNAJC30; interaction is direct. In terms of processing, trimethylated by ATPSCKMT at Lys-109. Methylation is required for proper incorporation of the C subunit into the ATP synthase complex and mitochondrial respiration.

It localises to the mitochondrion membrane. Mitochondrial membrane ATP synthase (F(1)F(0) ATP synthase or Complex V) produces ATP from ADP in the presence of a proton gradient across the membrane which is generated by electron transport complexes of the respiratory chain. F-type ATPases consist of two structural domains, F(1) - containing the extramembraneous catalytic core and F(0) - containing the membrane proton channel, linked together by a central stalk and a peripheral stalk. During catalysis, ATP synthesis in the catalytic domain of F(1) is coupled via a rotary mechanism of the central stalk subunits to proton translocation. Part of the complex F(0) domain. A homomeric c-ring of probably 10 subunits is part of the complex rotary element. This chain is ATP synthase F(0) complex subunit C2, mitochondrial, found in Rattus norvegicus (Rat).